A 125-amino-acid chain; its full sequence is Cystatin-like cysteine protease inhibitor EPIC2B (125 aa).

An N-terminal signal peptide occupies residues 1 to 21 (MSFLRPTLALLAVTALVTTSG). N-linked (GlcNAc...) asparagine glycosylation is present at N45. Residues 68 to 72 (QVVSG) carry the Secondary area of contact motif.

The protein belongs to the cystatin family. In terms of assembly, interacts with the host papain-like cysteine protease PIP1. Interacts with the host papain-like cysteine protease RCR3. Interacts with the host papain-like cysteine protease C14.

It is found in the secreted. Functionally, secreted effector that interacts with and inhibits the pathogenesis-related papain-like cysteine proteases C14, PIP1 and RCR3 of host plants. Inhibition of host proteases by a pathogen extracellular protease inhibitor forms a specific type of defense-counterdefense mechanism between plants and microbial pathogens. This Phytophthora infestans (Potato late blight agent) protein is Cystatin-like cysteine protease inhibitor EPIC2B.